The following is a 331-amino-acid chain: Anthranilate phosphoribosyltransferase (331 aa).

5-phospho-alpha-D-ribose 1-diphosphate contacts are provided by residues glycine 79, 82 to 83, serine 87, 89 to 92, 107 to 115, and serine 119; these read GD, NIST, and KHCNTSISS. Glycine 79 serves as a coordination point for anthranilate. Serine 91 lines the Mg(2+) pocket. Asparagine 110 is an anthranilate binding site. Position 165 (arginine 165) interacts with anthranilate. 2 residues coordinate Mg(2+): aspartate 223 and glutamate 224.

It belongs to the anthranilate phosphoribosyltransferase family. In terms of assembly, homodimer. Requires Mg(2+) as cofactor.

It catalyses the reaction N-(5-phospho-beta-D-ribosyl)anthranilate + diphosphate = 5-phospho-alpha-D-ribose 1-diphosphate + anthranilate. It functions in the pathway amino-acid biosynthesis; L-tryptophan biosynthesis; L-tryptophan from chorismate: step 2/5. Functionally, catalyzes the transfer of the phosphoribosyl group of 5-phosphorylribose-1-pyrophosphate (PRPP) to anthranilate to yield N-(5'-phosphoribosyl)-anthranilate (PRA). This is Anthranilate phosphoribosyltransferase from Buchnera aphidicola subsp. Schlechtendalia chinensis.